We begin with the raw amino-acid sequence, 1026 residues long: UPF0182 protein FRAAL6027 (1026 aa).

7 helical membrane-spanning segments follow: residues 13–33 (AKVI…VAIF), 60–80 (ILLF…NIVL), 108–128 (YMKL…GLSA), 167–187 (FLLG…VLTH), 208–228 (AHIS…YYLD), 250–270 (AVLP…VLFI), and 283–303 (LGAG…PAFI). The segment covering 877–888 (AAAGAGTGATTT) has biased composition (low complexity). Disordered regions lie at residues 877-916 (AAAG…LQDA) and 958-1026 (LASP…PPPG). A compositionally biased stretch (gly residues) spans 889-903 (TGGGGQATTQGGGTG). Over residues 970–1001 (PTPSRSAAPTTRGTAAGSAPPGTTPAVAAPAG) the composition is skewed to low complexity. The span at 1016 to 1026 (PQQPRAAPPPG) shows a compositional bias: pro residues.

Belongs to the UPF0182 family.

Its subcellular location is the cell membrane. The sequence is that of UPF0182 protein FRAAL6027 from Frankia alni (strain DSM 45986 / CECT 9034 / ACN14a).